Reading from the N-terminus, the 158-residue chain is DNA-binding transcriptional repressor RacR (158 aa).

As to quaternary structure, homooctamer.

In terms of biological role, transcriptional regulator that represses the expression of ydaS and ydaT under normal physiological conditions. It binds to its own upstream sequence and represses the adjacent and divergently coded ydaS-ydaT operon. RacR-mediated down-regulation of ydaS and ydaT may be critical for cell survival. RacR ensures that the prophage DNA is maintained in the genome. When the expression of the racR gene is reduced, the prophage Rac is excised from the genome, possibly to counteract the lethal toxicity of YdaT. In Escherichia coli (strain K12), this protein is DNA-binding transcriptional repressor RacR (racR).